Here is a 745-residue protein sequence, read N- to C-terminus: MIVLFTLLRWAPISPVFSMRTMHANLAHRGIFLPVMIVTLPLPVHLRRRFPAQMVLMLQWFAFGMFSVLLIIPWLLCVYRLVTHSPGRTKRIKQVLDDRTAPKTVVVMPVYKEAPETLIRAIDSVVDCDYPANCIHVFLSYDGCLIDESYLRLIEHLGIPITLESYPQSIDVTYKDARITVSRFKHGGKRHCQKQTFRLIDMVYADYLERHDNLFVLFIDSDCILDRVCLQNFMYDMELKPGSKHDMLAMTGVITSTTDRGSLLTLLQDMEYVHGQLFERSVESSCGAVTCLPGALTMLRFSAFRKMAKYYFADKAEQCEDFFDYGKCHLGEDRWLTHLFMVGARKRYQIQMCAGAFCKTEAVQTFSSLLKQRRRWFLGFITNEVCMLTDVRLWKRYPLLCLVRFMQNTIRTTALLFFIIALSLITTSSSINDLPVGFIAISLGLNYVLMFYLGAKLKRYKAWLFPLMFILNPFFNWLYMVYGILTAGQRTWGGPRADAATADEHTSPEEAVELAKAQGDELNVDLTTFRSRGDEKSVPIHPSEKIDGRFSAPELPDGYDSNLNDSNAALTELMTPLPSVPRIGIHTYPSSDSILTSDSLSSIHLPLKVEELTGDNDNMKPYPDRQPRDTSSLHQMQRTCSNGIVASDSCSSQDDASEMVNKPEILSPSAHILPHPSQATESSSGEDIYPLHLPSPHQHEAHFAPLNASTRGSMEGNTPEVQRPRRKLPGIPRPIRAQKDPESMV.

Helical transmembrane passes span 26–46 (LAHR…PVHL), 55–75 (VLML…IPWL), 412–432 (TTAL…SSIN), 434–454 (LPVG…FYLG), and 464–484 (LFPL…VYGI). Disordered stretches follow at residues 613 to 635 (TGDN…SLHQ) and 672 to 745 (ILPH…ESMV). The segment covering 707 to 720 (NASTRGSMEGNTPE) has biased composition (polar residues).

This sequence belongs to the chitin synthase family. Class VI subfamily.

It is found in the cell membrane. The catalysed reaction is [(1-&gt;4)-N-acetyl-beta-D-glucosaminyl](n) + UDP-N-acetyl-alpha-D-glucosamine = [(1-&gt;4)-N-acetyl-beta-D-glucosaminyl](n+1) + UDP + H(+). Polymerizes chitin, a structural polymer of the cell wall and septum, by transferring the sugar moiety of UDP-GlcNAc to the non-reducing end of the growing chitin polymer. In Aspergillus fumigatus (strain ATCC MYA-4609 / CBS 101355 / FGSC A1100 / Af293) (Neosartorya fumigata), this protein is Chitin synthase D (chsD).